Here is a 343-residue protein sequence, read N- to C-terminus: 3-isopropylmalate dehydrogenase (343 aa).

Positions 94, 104, 128, and 218 each coordinate substrate. Mg(2+) is bound by residues Asp-218, Asp-242, and Asp-246. NAD(+) is bound at residue 278–290 (GSAPDIAGQNKAN).

It belongs to the isocitrate and isopropylmalate dehydrogenases family. LeuB type 2 subfamily. Homodimer. Mg(2+) is required as a cofactor. The cofactor is Mn(2+).

It localises to the cytoplasm. The enzyme catalyses (2R,3S)-3-isopropylmalate + NAD(+) = 4-methyl-2-oxopentanoate + CO2 + NADH. It functions in the pathway amino-acid biosynthesis; L-leucine biosynthesis; L-leucine from 3-methyl-2-oxobutanoate: step 3/4. In terms of biological role, catalyzes the oxidation of 3-carboxy-2-hydroxy-4-methylpentanoate (3-isopropylmalate) to 3-carboxy-4-methyl-2-oxopentanoate. The product decarboxylates to 4-methyl-2 oxopentanoate. This chain is 3-isopropylmalate dehydrogenase, found in Bifidobacterium longum (strain DJO10A).